The primary structure comprises 832 residues: Valine--tRNA ligase (832 aa).

The short motif at 41–51 is the 'HIGH' region element; that stretch reads PNVTGKLHLGH. The 'KMSKS' region signature appears at 512–516; sequence KMSKS. Residue Lys515 coordinates ATP. A coiled-coil region spans residues 760-831; sequence FIEISQEQKQ…QIYLEELKWK (72 aa).

It belongs to the class-I aminoacyl-tRNA synthetase family. ValS type 1 subfamily. In terms of assembly, monomer.

Its subcellular location is the cytoplasm. The enzyme catalyses tRNA(Val) + L-valine + ATP = L-valyl-tRNA(Val) + AMP + diphosphate. In terms of biological role, catalyzes the attachment of valine to tRNA(Val). As ValRS can inadvertently accommodate and process structurally similar amino acids such as threonine, to avoid such errors, it has a 'posttransfer' editing activity that hydrolyzes mischarged Thr-tRNA(Val) in a tRNA-dependent manner. This Mycoplasmopsis synoviae (strain 53) (Mycoplasma synoviae) protein is Valine--tRNA ligase.